Consider the following 305-residue polypeptide: UDP-3-O-acyl-N-acetylglucosamine deacetylase (305 aa).

Residues His78, His237, and Asp241 each contribute to the Zn(2+) site. His264 serves as the catalytic Proton donor.

The protein belongs to the LpxC family. Zn(2+) is required as a cofactor.

It catalyses the reaction a UDP-3-O-[(3R)-3-hydroxyacyl]-N-acetyl-alpha-D-glucosamine + H2O = a UDP-3-O-[(3R)-3-hydroxyacyl]-alpha-D-glucosamine + acetate. It functions in the pathway glycolipid biosynthesis; lipid IV(A) biosynthesis; lipid IV(A) from (3R)-3-hydroxytetradecanoyl-[acyl-carrier-protein] and UDP-N-acetyl-alpha-D-glucosamine: step 2/6. Functionally, catalyzes the hydrolysis of UDP-3-O-myristoyl-N-acetylglucosamine to form UDP-3-O-myristoylglucosamine and acetate, the committed step in lipid A biosynthesis. The chain is UDP-3-O-acyl-N-acetylglucosamine deacetylase from Dechloromonas aromatica (strain RCB).